The primary structure comprises 426 residues: Gamma-glutamyl phosphate reductase (426 aa).

This sequence belongs to the gamma-glutamyl phosphate reductase family.

The protein resides in the cytoplasm. It carries out the reaction L-glutamate 5-semialdehyde + phosphate + NADP(+) = L-glutamyl 5-phosphate + NADPH + H(+). It functions in the pathway amino-acid biosynthesis; L-proline biosynthesis; L-glutamate 5-semialdehyde from L-glutamate: step 2/2. In terms of biological role, catalyzes the NADPH-dependent reduction of L-glutamate 5-phosphate into L-glutamate 5-semialdehyde and phosphate. The product spontaneously undergoes cyclization to form 1-pyrroline-5-carboxylate. This chain is Gamma-glutamyl phosphate reductase, found in Cupriavidus necator (strain ATCC 17699 / DSM 428 / KCTC 22496 / NCIMB 10442 / H16 / Stanier 337) (Ralstonia eutropha).